Here is a 447-residue protein sequence, read N- to C-terminus: Cysteine--tRNA ligase (447 aa).

Cys-28 contacts Zn(2+). Positions Pro-30–Asn-40 match the 'HIGH' region motif. Zn(2+) is bound by residues Cys-211, His-236, and Glu-240. The 'KMSKS' region motif lies at Lys-268–Ser-272. Residue Lys-271 coordinates ATP.

This sequence belongs to the class-I aminoacyl-tRNA synthetase family. In terms of assembly, monomer. Requires Zn(2+) as cofactor.

It is found in the cytoplasm. The catalysed reaction is tRNA(Cys) + L-cysteine + ATP = L-cysteinyl-tRNA(Cys) + AMP + diphosphate. In Streptococcus agalactiae serotype V (strain ATCC BAA-611 / 2603 V/R), this protein is Cysteine--tRNA ligase.